Reading from the N-terminus, the 197-residue chain is 3-isopropylmalate dehydratase small subunit (197 aa).

The protein belongs to the LeuD family. LeuD type 1 subfamily. In terms of assembly, heterodimer of LeuC and LeuD.

The catalysed reaction is (2R,3S)-3-isopropylmalate = (2S)-2-isopropylmalate. It functions in the pathway amino-acid biosynthesis; L-leucine biosynthesis; L-leucine from 3-methyl-2-oxobutanoate: step 2/4. Catalyzes the isomerization between 2-isopropylmalate and 3-isopropylmalate, via the formation of 2-isopropylmaleate. The polypeptide is 3-isopropylmalate dehydratase small subunit (Streptococcus suis (strain 98HAH33)).